A 529-amino-acid polypeptide reads, in one-letter code: Neuronal acetylcholine receptor subunit alpha-2 (529 aa).

The N-terminal stretch at 1–26 (MGPSCPVFLSFTKLSLWWLLLTPAGG) is a signal peptide. A disordered region spans residues 27-56 (EEAKRPPPRAPGDPLSSPSPTALPQGGSHT). The Extracellular segment spans residues 27–264 (EEAKRPPPRA…VTYAFIIRRL (238 aa)). N-linked (GlcNAc...) asparagine glycans are attached at residues asparagine 79 and asparagine 129. Cysteine 183 and cysteine 197 are disulfide-bonded. Asparagine 235 carries N-linked (GlcNAc...) asparagine glycosylation. Cysteine 247 and cysteine 248 form a disulfide bridge. Transmembrane regions (helical) follow at residues 265–289 (PLFYTINLIIPCLLISCLTVLVFYL), 297–315 (ITLCISVLLSLTVFLLLIT), and 331–352 (YLLFTMIFVTLSIVITVFVLNV). Over 353 to 502 (HHRSPSTHTM…WKYVAMVIDR (150 aa)) the chain is Cytoplasmic. The chain crosses the membrane as a helical span at residues 503 to 521 (IFLWLFIIVCFLGTIGLFL).

It belongs to the ligand-gated ion channel (TC 1.A.9) family. Acetylcholine receptor (TC 1.A.9.1) subfamily. Alpha-2/CHRNA2 sub-subfamily. As to quaternary structure, neuronal AChR is composed of two different types of subunits: alpha and non-alpha (beta). CHRNA2/alpha-2 subunit can be combined to CHRNB2/beta-2 or CHRNB4/beta-4 to give rise to functional receptors. Both CHRNA2:CHRNB2 and CHRNA2:CHRNB4 nAChR complexes are heteropentamers with two subtypes: LS (low agonist sensitivity) with a (CHRNA2)3:(CHRNB2/4)2 and HS (high agonist sensitivity) with a (CHRNA2)2:(CHRNB2/4)3 stoichiometries; the subtypes differ in their subunit binding interfaces which are involved in ligand binding.

The protein localises to the synaptic cell membrane. It is found in the cell membrane. It carries out the reaction Ca(2+)(in) = Ca(2+)(out). The enzyme catalyses K(+)(in) = K(+)(out). The catalysed reaction is Na(+)(in) = Na(+)(out). Functionally, component of neuronal acetylcholine receptors (nAChRs) that function as pentameric, ligand-gated cation channels with high calcium permeability among other activities. nAChRs are excitatory neurotrasnmitter receptors formed by a collection of nAChR subunits known to mediate synaptic transmission in the nervous system and the neuromuscular junction. Each nAchR subunit confers differential attributes to channel properties, including activation, deactivation and desensitization kinetics, pH sensitivity, cation permeability, and binding to allosteric modulators. CHRNA2 forms heteropentameric neuronal acetylcholine receptors with CHRNB2 and CHRNB4 and plays a role in nicotine dependence. This chain is Neuronal acetylcholine receptor subunit alpha-2 (CHRNA2), found in Pan troglodytes (Chimpanzee).